A 394-amino-acid polypeptide reads, in one-letter code: NAD(P)H-quinone oxidoreductase subunit H (394 aa).

The protein belongs to the complex I 49 kDa subunit family. As to quaternary structure, NDH-1 can be composed of about 15 different subunits; different subcomplexes with different compositions have been identified which probably have different functions.

It localises to the cellular thylakoid membrane. The catalysed reaction is a plastoquinone + NADH + (n+1) H(+)(in) = a plastoquinol + NAD(+) + n H(+)(out). It catalyses the reaction a plastoquinone + NADPH + (n+1) H(+)(in) = a plastoquinol + NADP(+) + n H(+)(out). NDH-1 shuttles electrons from an unknown electron donor, via FMN and iron-sulfur (Fe-S) centers, to quinones in the respiratory and/or the photosynthetic chain. The immediate electron acceptor for the enzyme in this species is believed to be plastoquinone. Couples the redox reaction to proton translocation, and thus conserves the redox energy in a proton gradient. Cyanobacterial NDH-1 also plays a role in inorganic carbon-concentration. The protein is NAD(P)H-quinone oxidoreductase subunit H of Parasynechococcus marenigrum (strain WH8102).